We begin with the raw amino-acid sequence, 360 residues long: Squamosa promoter-binding-like protein 7 (360 aa).

A compositionally biased stretch (gly residues) spans 74–89 (AQGSGGGGGGGGGGSA). The tract at residues 74–98 (AQGSGGGGGGGGGGSADQGKRKEKA) is disordered. Residues 105–182 (VPRCQVEGCD…AGHNERRRRS (78 aa)) form an SBP-type zinc finger. The Zn(2+) site is built by Cys-108, Cys-113, Cys-130, His-133, Cys-149, Cys-152, His-156, and Cys-168. Residues 165–181 (KKSCRRRLAGHNERRRR) carry the Bipartite nuclear localization signal motif. The segment covering 172 to 182 (LAGHNERRRRS) has biased composition (basic residues). Disordered stretches follow at residues 172–196 (LAGH…AHPH), 261–306 (FFSD…HENQ), and 318–360 (TTAA…ARVV).

Expressed in young panicles.

The protein resides in the nucleus. Functionally, trans-acting factor that binds specifically to the consensus nucleotide sequence 5'-TNCGTACAA-3'. May be involved in panicle development. The sequence is that of Squamosa promoter-binding-like protein 7 (SPL7) from Oryza sativa subsp. japonica (Rice).